The following is a 220-amino-acid chain: PKHD-type hydroxylase PCC7424_1929 (220 aa).

The 97-residue stretch at 77–173 folds into the Fe2OG dioxygenase domain; sequence KIHSLLFSRY…RLVAVGWVQS (97 aa). Residues H95, D97, and H154 each contribute to the Fe cation site. R164 is a 2-oxoglutarate binding site.

Fe(2+) serves as cofactor. The cofactor is L-ascorbate.

The polypeptide is PKHD-type hydroxylase PCC7424_1929 (Gloeothece citriformis (strain PCC 7424) (Cyanothece sp. (strain PCC 7424))).